Reading from the N-terminus, the 287-residue chain is Co-chaperone protein DjlA (287 aa).

Residues 1–6 lie on the Periplasmic side of the membrane; the sequence is MNFIGK. The chain crosses the membrane as a helical span at residues 7-30; that stretch reads FLGLIIGWKLGGFFGAICGVILGH. The Cytoplasmic portion of the chain corresponds to 31 to 287; it reads LGDKKLYELG…DLICKTKGWK (257 aa). The J domain maps to 221-287; the sequence is DAYKVLGVSA…DLICKTKGWK (67 aa).

In terms of assembly, homodimer.

The protein localises to the cell inner membrane. In terms of biological role, regulatory DnaK co-chaperone. Direct interaction between DnaK and DjlA is needed for the induction of the wcaABCDE operon, involved in the synthesis of a colanic acid polysaccharide capsule, possibly through activation of the RcsB/RcsC phosphotransfer signaling pathway. The colanic acid capsule may help the bacterium survive conditions outside the host. The sequence is that of Co-chaperone protein DjlA from Pasteurella multocida (strain Pm70).